The chain runs to 252 residues: Iron-sulfur cluster co-chaperone protein HscB homolog (252 aa).

A mitochondrion-targeting transit peptide spans 1–59 (MKKTKTMVASISTLIRRTYPSTNQCNSLATIQSQTQLPRESLQHHSSAEGRLRFSGRVF). In terms of domain architecture, J spans 93-165 (DYFQIFGLEK…LSRAMYIMKL (73 aa)).

This sequence belongs to the HscB family. In terms of assembly, interacts with ISU1 and HSP70-9/HSCA1.

The protein localises to the mitochondrion. The protein resides in the cytoplasm. Its subcellular location is the cytosol. Its function is as follows. Co-chaperone required for the assembly of iron-sulfur [Fe-S] clusters in both mitochondria and cytosol. Required for the activity of iron-sulfur proteins such as aconitase and succinate dehydrogenase. Involved in iron homeostasis and may take part in the control of iron translocation from roots to shoots. In Arabidopsis thaliana (Mouse-ear cress), this protein is Iron-sulfur cluster co-chaperone protein HscB homolog.